The sequence spans 124 residues: Ribonuclease pancreatic (124 aa).

Residues 1–15 (KESPAKKFQRQHMDP) are compositionally biased toward basic and acidic residues. A disordered region spans residues 1 to 24 (KESPAKKFQRQHMDPDSSSSNSSN). The substrate site is built by Lys-7 and Arg-10. The active-site Proton acceptor is the His-12. 2 N-linked (GlcNAc...) asparagine glycosylation sites follow: Asn-21 and Asn-34. 4 disulfide bridges follow: Cys-26–Cys-84, Cys-40–Cys-95, Cys-58–Cys-110, and Cys-65–Cys-72. Substrate-binding positions include 41-45 (KPVNT) and Lys-66. A glycan (N-linked (GlcNAc...) asparagine) is linked at Asn-76. Arg-85 contributes to the substrate binding site. His-119 acts as the Proton donor in catalysis.

It belongs to the pancreatic ribonuclease family. In terms of assembly, monomer. Interacts with and forms tight 1:1 complexes with RNH1. Dimerization of two such complexes may occur. Interaction with RNH1 inhibits this protein. In terms of tissue distribution, pancreas.

The protein resides in the secreted. The enzyme catalyses an [RNA] containing cytidine + H2O = an [RNA]-3'-cytidine-3'-phosphate + a 5'-hydroxy-ribonucleotide-3'-[RNA].. It catalyses the reaction an [RNA] containing uridine + H2O = an [RNA]-3'-uridine-3'-phosphate + a 5'-hydroxy-ribonucleotide-3'-[RNA].. Functionally, endonuclease that catalyzes the cleavage of RNA on the 3' side of pyrimidine nucleotides. Acts on single-stranded and double-stranded RNA. In Sus scrofa (Pig), this protein is Ribonuclease pancreatic (RNASE1).